The primary structure comprises 332 residues: Ribosomal RNA small subunit methyltransferase C (332 aa).

It belongs to the methyltransferase superfamily. RsmC family. In terms of assembly, monomer.

Its subcellular location is the cytoplasm. It catalyses the reaction guanosine(1207) in 16S rRNA + S-adenosyl-L-methionine = N(2)-methylguanosine(1207) in 16S rRNA + S-adenosyl-L-homocysteine + H(+). Specifically methylates the guanine in position 1207 of 16S rRNA in the 30S particle. The polypeptide is Ribosomal RNA small subunit methyltransferase C (Pseudomonas aeruginosa (strain UCBPP-PA14)).